Here is a 397-residue protein sequence, read N- to C-terminus: Probable protein phosphatase 2C 74 (397 aa).

The PPM-type phosphatase domain occupies Gly133–Leu391. Asp170, Gly171, Asp343, and Asp382 together coordinate Mn(2+).

Belongs to the PP2C family. Mg(2+) is required as a cofactor. It depends on Mn(2+) as a cofactor.

The catalysed reaction is O-phospho-L-seryl-[protein] + H2O = L-seryl-[protein] + phosphate. It carries out the reaction O-phospho-L-threonyl-[protein] + H2O = L-threonyl-[protein] + phosphate. The protein is Probable protein phosphatase 2C 74 of Oryza sativa subsp. japonica (Rice).